We begin with the raw amino-acid sequence, 184 residues long: Major fimbrial subunit (184 aa).

Residues 1-22 (MKLSKIALAAALVFGINSVATA) form the signal peptide. An intrachain disulfide couples Cys-49 to Cys-88.

Belongs to the fimbrial protein family.

Its subcellular location is the fimbrium. Major structural component of PMF fimbriae. This is Major fimbrial subunit (pmfA) from Proteus mirabilis (strain HI4320).